The sequence spans 66 residues: Large ribosomal subunit protein bL31 (66 aa).

Zn(2+)-binding residues include Cys-16, Cys-18, Cys-36, and Cys-39.

Belongs to the bacterial ribosomal protein bL31 family. Type A subfamily. As to quaternary structure, part of the 50S ribosomal subunit. Requires Zn(2+) as cofactor.

In terms of biological role, binds the 23S rRNA. The protein is Large ribosomal subunit protein bL31 of Nautilia profundicola (strain ATCC BAA-1463 / DSM 18972 / AmH).